The following is a 102-amino-acid chain: Small ribosomal subunit protein uS10 (102 aa).

It belongs to the universal ribosomal protein uS10 family. In terms of assembly, part of the 30S ribosomal subunit.

Functionally, involved in the binding of tRNA to the ribosomes. This is Small ribosomal subunit protein uS10 from Thermotoga neapolitana (strain ATCC 49049 / DSM 4359 / NBRC 107923 / NS-E).